The sequence spans 174 residues: NADH-quinone oxidoreductase subunit I (174 aa).

2 consecutive 4Fe-4S ferredoxin-type domains span residues 44–74 (LNRY…VEGD) and 90–119 (RVYQ…MTND). Positions 54, 57, 60, 64, 99, 102, 105, and 109 each coordinate [4Fe-4S] cluster.

Belongs to the complex I 23 kDa subunit family. NDH-1 is composed of 14 different subunits. Subunits NuoA, H, J, K, L, M, N constitute the membrane sector of the complex. [4Fe-4S] cluster serves as cofactor.

It is found in the cell membrane. The catalysed reaction is a quinone + NADH + 5 H(+)(in) = a quinol + NAD(+) + 4 H(+)(out). Its function is as follows. NDH-1 shuttles electrons from NADH, via FMN and iron-sulfur (Fe-S) centers, to quinones in the respiratory chain. The immediate electron acceptor for the enzyme in this species is believed to be menaquinone. Couples the redox reaction to proton translocation (for every two electrons transferred, four hydrogen ions are translocated across the cytoplasmic membrane), and thus conserves the redox energy in a proton gradient. This chain is NADH-quinone oxidoreductase subunit I, found in Mycobacterium sp. (strain JLS).